Reading from the N-terminus, the 878-residue chain is Longitudinals lacking protein, isoforms N/O/W/X/Y (878 aa).

The BTB domain occupies 32–97; sequence VDCTLAAEGK…MYRGEVNISQ (66 aa). Disordered regions lie at residues 115–200, 228–340, and 542–583; these read LSDN…SSVL, SSGP…ASAS, and QIVK…QTHA. Composition is skewed to low complexity over residues 162-175, 228-251, 263-293, 329-340, and 546-569; these read SGDV…SSSP, SSGP…LTST, TSST…QTTS, NSATGPNPASAS, and QQHQ…QQQQ. Residues 709–731 form a C2H2-type 1; degenerate zinc finger; the sequence is YACNVCGKTYKIKGSLKRHKNYE. The C2H2-type 2 zinc finger occupies 794–816; the sequence is FQCDFCLKWFKRRSHLNRHKKLH. The tract at residues 826–863 is disordered; it reads SKQKPKTTSGQNLSHDANTDDEVATTNPAATEDESNYP. A compositionally biased stretch (polar residues) spans 831-841; the sequence is KTTSGQNLSHD.

In terms of tissue distribution, by stage 11, isoform W, isoform X and isoform Y are expressed throughout the mesoderm, whereas isoform O is expressed in both mesoderm and ectoderm. From stage 15, expression of isoform O expands to all tissues, whereas expression of isoform W, isoform X and isoform Y becomes restricted during later stages; starting from stage 14 to 16, isoform W, isoform X and isoform Y are expressed in muscle. From stages 14 and 15, isoform W and isoform Y are expressed in the gut. For some isoforms, expression is also seen in specific types of cells in the embryo; isoform O is expressed in the ventral furrow at stage 5 and in the dorsal epidermis from stage 7. Isoform Y shows prominent expression in the gonad starting at stage 15.

It localises to the nucleus. Putative transcription factor required for axon growth and guidance in the central and peripheral nervous systems. Repels CNS axons away from the midline by promoting the expression of the midline repellent sli and its receptor robo. The protein is Longitudinals lacking protein, isoforms N/O/W/X/Y of Drosophila melanogaster (Fruit fly).